A 242-amino-acid chain; its full sequence is Probable pectate lyase D (242 aa).

Positions 1–17 (MYQKSLLFSLLASSALA) are cleaved as a signal peptide. The N-linked (GlcNAc...) asparagine glycan is linked to asparagine 216. The tract at residues 217 to 242 (DTGAEPEEISEGPSDACQYSEPLSSC) is disordered.

This sequence belongs to the polysaccharide lyase 3 family. Ca(2+) is required as a cofactor.

Its subcellular location is the secreted. The catalysed reaction is Eliminative cleavage of (1-&gt;4)-alpha-D-galacturonan to give oligosaccharides with 4-deoxy-alpha-D-galact-4-enuronosyl groups at their non-reducing ends.. In terms of biological role, pectinolytic enzyme consist of four classes of enzymes: pectin lyase, polygalacturonase, pectin methylesterase and rhamnogalacturonase. Among pectinolytic enzymes, pectin lyase is the most important in depolymerization of pectin, since it cleaves internal glycosidic bonds of highly methylated pectins. Favors pectate, the anion, over pectin, the methyl ester. The chain is Probable pectate lyase D (plyD) from Aspergillus fumigatus (strain CBS 144.89 / FGSC A1163 / CEA10) (Neosartorya fumigata).